Reading from the N-terminus, the 424-residue chain is Probable ribonuclease FAU-1 (424 aa).

Belongs to the FAU-1 family.

In terms of biological role, probable RNase involved in rRNA stability through maturation and/or degradation of precursor rRNAs. Binds to RNA in loop regions with AU-rich sequences. This Saccharolobus islandicus (strain L.S.2.15 / Lassen #1) (Sulfolobus islandicus) protein is Probable ribonuclease FAU-1.